Consider the following 262-residue polypeptide: Alpha/beta-gliadin A-I (262 aa).

The signal sequence occupies residues 1-20; the sequence is MKTFLILALLAIVATTATTA. 3 disordered regions span residues 51 to 73, 87 to 120, and 225 to 251; these read LGQQQPFPPQQPYPQPQPFPSQQ, PYSQPQPFRPQQPYPQPQPQYSQPQQPISQQQQQ, and YPLGQGSFRPSQQNPQAQGSVQPQQLP. Pro residues-rich tracts occupy residues 56–71 and 93–104; these read PFPPQQPYPQPQPFPS and PFRPQQPYPQPQ. A compositionally biased stretch (low complexity) spans 105 to 120; sequence PQYSQPQQPISQQQQQ. The segment covering 232–251 has biased composition (polar residues); it reads FRPSQQNPQAQGSVQPQQLP.

Belongs to the gliadin/glutenin family. Substrate of transglutaminase.

Gliadin is the major seed storage protein in wheat. The protein is Alpha/beta-gliadin A-I of Triticum aestivum (Wheat).